We begin with the raw amino-acid sequence, 171 residues long: tRNA-splicing endonuclease (171 aa).

Active-site residues include Y110, H117, and K148.

It belongs to the tRNA-intron endonuclease family. Archaeal short subfamily. Homotetramer; although the tetramer contains four active sites, only two participate in the cleavage. Therefore, it should be considered as a dimer of dimers.

It carries out the reaction pretRNA = a 3'-half-tRNA molecule with a 5'-OH end + a 5'-half-tRNA molecule with a 2',3'-cyclic phosphate end + an intron with a 2',3'-cyclic phosphate and a 5'-hydroxyl terminus.. Functionally, endonuclease that removes tRNA introns. Cleaves pre-tRNA at the 5'- and 3'-splice sites to release the intron. The products are an intron and two tRNA half-molecules bearing 2',3' cyclic phosphate and 5'-OH termini. Recognizes a pseudosymmetric substrate in which 2 bulged loops of 3 bases are separated by a stem of 4 bp. This chain is tRNA-splicing endonuclease, found in Thermococcus onnurineus (strain NA1).